Consider the following 286-residue polypeptide: Phosphatidylserine decarboxylase proenzyme (286 aa).

Catalysis depends on charge relay system; for autoendoproteolytic cleavage activity residues D90, H147, and S252. The active-site Schiff-base intermediate with substrate; via pyruvic acid; for decarboxylase activity is S252. At S252 the chain carries Pyruvic acid (Ser); by autocatalysis.

Belongs to the phosphatidylserine decarboxylase family. PSD-B subfamily. Prokaryotic type I sub-subfamily. Heterodimer of a large membrane-associated beta subunit and a small pyruvoyl-containing alpha subunit. It depends on pyruvate as a cofactor. In terms of processing, is synthesized initially as an inactive proenzyme. Formation of the active enzyme involves a self-maturation process in which the active site pyruvoyl group is generated from an internal serine residue via an autocatalytic post-translational modification. Two non-identical subunits are generated from the proenzyme in this reaction, and the pyruvate is formed at the N-terminus of the alpha chain, which is derived from the carboxyl end of the proenzyme. The autoendoproteolytic cleavage occurs by a canonical serine protease mechanism, in which the side chain hydroxyl group of the serine supplies its oxygen atom to form the C-terminus of the beta chain, while the remainder of the serine residue undergoes an oxidative deamination to produce ammonia and the pyruvoyl prosthetic group on the alpha chain. During this reaction, the Ser that is part of the protease active site of the proenzyme becomes the pyruvoyl prosthetic group, which constitutes an essential element of the active site of the mature decarboxylase.

The protein resides in the cell membrane. The enzyme catalyses a 1,2-diacyl-sn-glycero-3-phospho-L-serine + H(+) = a 1,2-diacyl-sn-glycero-3-phosphoethanolamine + CO2. The protein operates within phospholipid metabolism; phosphatidylethanolamine biosynthesis; phosphatidylethanolamine from CDP-diacylglycerol: step 2/2. Catalyzes the formation of phosphatidylethanolamine (PtdEtn) from phosphatidylserine (PtdSer). This is Phosphatidylserine decarboxylase proenzyme from Ectopseudomonas mendocina (strain ymp) (Pseudomonas mendocina).